The primary structure comprises 219 residues: Imidazole glycerol phosphate synthase subunit HisH (219 aa).

The Glutamine amidotransferase type-1 domain maps to 4–216 (TVTVLDYGSG…VDSLPATGRN (213 aa)). Catalysis depends on C82, which acts as the Nucleophile. Catalysis depends on residues H191 and E193.

As to quaternary structure, heterodimer of HisH and HisF.

It is found in the cytoplasm. The catalysed reaction is 5-[(5-phospho-1-deoxy-D-ribulos-1-ylimino)methylamino]-1-(5-phospho-beta-D-ribosyl)imidazole-4-carboxamide + L-glutamine = D-erythro-1-(imidazol-4-yl)glycerol 3-phosphate + 5-amino-1-(5-phospho-beta-D-ribosyl)imidazole-4-carboxamide + L-glutamate + H(+). The enzyme catalyses L-glutamine + H2O = L-glutamate + NH4(+). The protein operates within amino-acid biosynthesis; L-histidine biosynthesis; L-histidine from 5-phospho-alpha-D-ribose 1-diphosphate: step 5/9. IGPS catalyzes the conversion of PRFAR and glutamine to IGP, AICAR and glutamate. The HisH subunit catalyzes the hydrolysis of glutamine to glutamate and ammonia as part of the synthesis of IGP and AICAR. The resulting ammonia molecule is channeled to the active site of HisF. The sequence is that of Imidazole glycerol phosphate synthase subunit HisH from Renibacterium salmoninarum (strain ATCC 33209 / DSM 20767 / JCM 11484 / NBRC 15589 / NCIMB 2235).